A 344-amino-acid polypeptide reads, in one-letter code: Fructose-1,6-bisphosphatase class 1 (344 aa).

E90, D109, L111, and D112 together coordinate Mg(2+). Substrate contacts are provided by residues 112-115 (DGSS) and N200. E271 contacts Mg(2+).

The protein belongs to the FBPase class 1 family. As to quaternary structure, homotetramer. Mg(2+) is required as a cofactor.

The protein localises to the cytoplasm. It catalyses the reaction beta-D-fructose 1,6-bisphosphate + H2O = beta-D-fructose 6-phosphate + phosphate. It functions in the pathway carbohydrate biosynthesis; gluconeogenesis. In Nitrobacter vulgaris, this protein is Fructose-1,6-bisphosphatase class 1.